The chain runs to 333 residues: Autoinducer 2 import system permease protein LsrD (333 aa).

Transmembrane regions (helical) follow at residues 7–27 (YGWE…FGLS), 45–65 (ICIG…GIDI), 67–87 (FGST…AGVP), 90–110 (VAIP…AGLI), 118–138 (LVIT…LSGL), 162–182 (LFGL…FWLL), 212–232 (TLCM…ILLV), 240–260 (SDLG…GGAN), 261–281 (IYGG…VGYL), and 288–308 (IGTP…LVVV).

The protein belongs to the binding-protein-dependent transport system permease family. AraH/RbsC subfamily. As to quaternary structure, the complex is composed of two ATP-binding proteins (LsrA), two transmembrane proteins (LsrC and LsrD) and a solute-binding protein (LsrB).

The protein resides in the cell inner membrane. Part of the ABC transporter complex LsrABCD involved in autoinducer 2 (AI-2) import. Probably responsible for the translocation of the substrate across the membrane. The polypeptide is Autoinducer 2 import system permease protein LsrD (lsrD) (Yersinia pseudotuberculosis serotype IB (strain PB1/+)).